Here is a 145-residue protein sequence, read N- to C-terminus: Peptide methionine sulfoxide reductase MsrB (145 aa).

The 124-residue stretch at 4-127 folds into the MsrB domain; sequence SEELKQRIGD…NSAALKFIPY (124 aa). The active-site Nucleophile is the Cys-116.

The protein belongs to the MsrB Met sulfoxide reductase family.

The catalysed reaction is L-methionyl-[protein] + [thioredoxin]-disulfide + H2O = L-methionyl-(R)-S-oxide-[protein] + [thioredoxin]-dithiol. The chain is Peptide methionine sulfoxide reductase MsrB from Streptococcus pyogenes serotype M6 (strain ATCC BAA-946 / MGAS10394).